Here is a 232-residue protein sequence, read N- to C-terminus: Clarin-1 (232 aa).

Residues 8–28 form a helical membrane-spanning segment; sequence IIFCMAGVFSFACALGVVTAL. N-linked (GlcNAc...) asparagine glycosylation occurs at Asn48. 3 helical membrane-spanning segments follow: residues 101 to 121, 135 to 155, and 186 to 206; these read VILFSAILIVLTMVGTAFFMY, LGLYLLSFISGSCGCLVMILF, and TTSFWVIFFCFFVHFLNGLLI.

The protein belongs to the clarin family. Widely expressed. Found in the retina.

It is found in the cell membrane. May have a role in the excitatory ribbon synapse junctions between hair cells and cochlear ganglion cells and presumably also in analogous synapses within the retina. The polypeptide is Clarin-1 (CLRN1) (Homo sapiens (Human)).